A 230-amino-acid polypeptide reads, in one-letter code: UPF0173 metal-dependent hydrolase OEOE_1287 (230 aa).

Belongs to the UPF0173 family.

In Oenococcus oeni (strain ATCC BAA-331 / PSU-1), this protein is UPF0173 metal-dependent hydrolase OEOE_1287.